A 431-amino-acid polypeptide reads, in one-letter code: Glucose-1-phosphate adenylyltransferase (431 aa).

Lys39 provides a ligand contact to beta-D-fructose 1,6-bisphosphate. 3 residues coordinate AMP: Arg40, His46, and Arg52. Position 114 (Tyr114) interacts with alpha-D-glucose 1-phosphate. Arg130 provides a ligand contact to AMP. Alpha-D-glucose 1-phosphate-binding positions include Gly179, 194 to 195, and Ser212; that span reads EK. Arg386 contacts AMP. 429-431 lines the beta-D-fructose 1,6-bisphosphate pocket; sequence QER.

This sequence belongs to the bacterial/plant glucose-1-phosphate adenylyltransferase family. In terms of assembly, homotetramer.

It carries out the reaction alpha-D-glucose 1-phosphate + ATP + H(+) = ADP-alpha-D-glucose + diphosphate. Its pathway is glycan biosynthesis; glycogen biosynthesis. Its activity is regulated as follows. Allosterically activated by fructose-1,6-bisphosphate (F16BP) and inhibited by AMP. Functionally, involved in the biosynthesis of ADP-glucose, a building block required for the elongation reactions to produce glycogen. Catalyzes the reaction between ATP and alpha-D-glucose 1-phosphate (G1P) to produce pyrophosphate and ADP-Glc. In Klebsiella pneumoniae (strain 342), this protein is Glucose-1-phosphate adenylyltransferase.